We begin with the raw amino-acid sequence, 109 residues long: MVRPLNDFHEAKVRIKLSSYSASLLNLSCNNVLQSIKESNTSVKGPVFLPTRRRVYCVLRSPHVNKDSREHFEIRSHFRIIDISSCSSETIEMLMRLDLPTGVNIEIKT.

This sequence belongs to the universal ribosomal protein uS10 family. Part of the 30S ribosomal subunit.

The protein resides in the plastid. Its subcellular location is the chloroplast. In terms of biological role, involved in the binding of tRNA to the ribosomes. This Cyanidium caldarium (Red alga) protein is Small ribosomal subunit protein uS10c.